Consider the following 396-residue polypeptide: MVSITLKTNRIFRSCLNLATNLKFSITLFIIICIVSAIGTIIPQDKPKEFYMNTYSLKVLGMPLWKIIQLLSLEKIFYSNFYLILLLCLSFSLFFCSLKSQFPYLRTSRIIKLNNNNPPTSPLHESKKIKYNNIASKNDSSCVQLVSQGYKIYTFDKNLDKAGPLLIHLSLILILLGSAIHAFNDFIAQEMIPIYEVSHIQNVISSGRISKIPQTISLKASAFTVEHENEKVVKQFITNLAMLNSKGEVLKQGLVSVNHPLVYKQVYIFQMDWKLFGIRVNYGKNKIYEFPVQKIEANNEQQWSCTIPAKNQSKLILIFKNMSDEFYVYDNNQNFLKIGKINTPQLIRNTYFTVISKISGTGLQIKKDSSINIVYTGFLLLIIGLVINHKGSKKRT.

3 consecutive transmembrane segments (helical) span residues Leu-22–Ile-42, Ser-79–Lys-99, and Ala-162–Ala-182.

The protein belongs to the Ccs1/CcsB family. In terms of assembly, may interact with CcsA.

The protein resides in the plastid. It localises to the chloroplast thylakoid membrane. Functionally, required during biogenesis of c-type cytochromes (cytochrome c6 and cytochrome f) at the step of heme attachment. This chain is Cytochrome c biogenesis protein Ccs1, found in Cyanidium caldarium (Red alga).